We begin with the raw amino-acid sequence, 312 residues long: Glyoxylate/hydroxypyruvate reductase A (312 aa).

Arg227 is an active-site residue. The active-site Proton donor is His275.

This sequence belongs to the D-isomer specific 2-hydroxyacid dehydrogenase family. GhrA subfamily.

Its subcellular location is the cytoplasm. It carries out the reaction glycolate + NADP(+) = glyoxylate + NADPH + H(+). The catalysed reaction is (R)-glycerate + NAD(+) = 3-hydroxypyruvate + NADH + H(+). It catalyses the reaction (R)-glycerate + NADP(+) = 3-hydroxypyruvate + NADPH + H(+). Functionally, catalyzes the NADPH-dependent reduction of glyoxylate and hydroxypyruvate into glycolate and glycerate, respectively. The polypeptide is Glyoxylate/hydroxypyruvate reductase A (Escherichia coli O157:H7).